The primary structure comprises 1040 residues: Contactin-2 (1040 aa).

The first 30 residues, 1–30 (MGTHARKKASLLLLVLATVALVSSPGWSFA), serve as a signal peptide directing secretion. Ig-like C2-type domains are found at residues 39–130 (PIFE…AVLR), 135–224 (QEFS…SVFS), 241–324 (PSIK…GRII), 329–413 (PEWL…AELA), 419–506 (PDFR…GILS), and 511–605 (TKIT…ATVL). 4 disulfides stabilise this stretch: Cys-63/Cys-113, Cys-157/Cys-209, Cys-263/Cys-308, and Cys-350/Cys-397. 3 N-linked (GlcNAc...) asparagine glycosylation sites follow: Asn-78, Asn-200, and Asn-206. N-linked (GlcNAc...) asparagine glycosylation is found at Asn-463, Asn-479, Asn-500, and Asn-527. Fibronectin type-III domains are found at residues 612 to 710 (PPGG…TKEA), 715 to 812 (APSG…SAEE), 817 to 913 (APAK…VKPP), and 917 to 1008 (PPGN…NGGT). N-linked (GlcNAc...) asparagine glycosylation is present at Asn-777. Positions 796–798 (RGD) match the Cell attachment site motif. N-linked (GlcNAc...) asparagine glycosylation is found at Asn-832, Asn-920, and Asn-942. Residues 895 to 921 (RAGTGPASPSADAMTVKPPPRRPPGNI) are disordered. A lipid anchor (GPI-anchor amidated alanine) is attached at Ala-1015. Positions 1016 to 1040 (AARPAHPGPAFSCMVILMLAGYQKL) are cleaved as a propeptide — removed in mature form.

This sequence belongs to the immunoglobulin superfamily. Contactin family. In neural tissues in embryos, and in adult brain, spinal cord and cerebellum.

The protein localises to the cell membrane. May play a role in the initial growth and guidance of axons. May be involved in cell adhesion. In conjunction with another transmembrane protein, CNTNAP2, contributes to the organization of axonal domains at nodes of Ranvier by maintaining voltage-gated potassium channels at the juxtaparanodal region. The polypeptide is Contactin-2 (Cntn2) (Rattus norvegicus (Rat)).